Consider the following 309-residue polypeptide: Olfactory receptor 8B4 (309 aa).

Topologically, residues 1–25 are extracellular; sequence MTLRNSSSVTEFILVGLSEQPELQL. N-linked (GlcNAc...) asparagine glycosylation is present at Asn-5. Residues 26 to 46 traverse the membrane as a helical segment; sequence PLFLLFLGIYVFTVVGNLGLI. Residues 47 to 54 lie on the Cytoplasmic side of the membrane; sequence TLIGINPS. Residues 55-75 form a helical membrane-spanning segment; sequence LHTPMYFFLFNLSFIDLCYSC. Over 76-98 the chain is Extracellular; that stretch reads VFTPKMLNDFVSESIISYVGCMT. Cys-96 and Cys-188 are disulfide-bonded. A helical membrane pass occupies residues 99 to 119; that stretch reads QLFFFCFFVNSECYVLVSMAY. Topologically, residues 120–138 are cytoplasmic; that stretch reads DRYVAICNPLLYMVTMSPR. Residues 139–159 traverse the membrane as a helical segment; it reads VCFLLMFGSYVVGFAGAMAHT. The Extracellular segment spans residues 160-196; that stretch reads GSMLRLTFCDSNVIDHYLCDVLPLLQLSCTSTHVSEL. A helical membrane pass occupies residues 197-216; the sequence is VFFIVVGVITMLSSISIVIS. Residues 217-236 lie on the Cytoplasmic side of the membrane; sequence YALILSNILCIPSAEGRSKA. Residues 237-257 traverse the membrane as a helical segment; sequence FSTWGSHIIAVALFFGSGTFT. Over 258-270 the chain is Extracellular; it reads YLTTSFPGSMNHG. A helical transmembrane segment spans residues 271–291; sequence RFASVFYTNVVPMLNPSIYSL. Over 292-309 the chain is Cytoplasmic; sequence RNKDDKLALGKTLKRVLF.

Belongs to the G-protein coupled receptor 1 family.

The protein localises to the cell membrane. Odorant receptor. This Homo sapiens (Human) protein is Olfactory receptor 8B4 (OR8B4).